The following is a 190-amino-acid chain: Jupiter microtubule associated homolog 2 (190 aa).

The residue at position 1 (Met1) is an N-acetylmethionine. Residues 1–15 (MFQGADSQAGKSGSR) show a composition bias toward polar residues. A disordered region spans residues 1–190 (MFQGADSQAG…PGGKSSLSFY (190 aa)). An N6-acetyllysine modification is found at Lys11. The residue at position 30 (Ser30) is a Phosphoserine. Positions 35–44 (ISSSKPNRMA) are enriched in polar residues. A phosphoserine mark is found at Ser45, Ser69, and Ser97. 2 stretches are compositionally biased toward basic and acidic residues: residues 110-129 (KPKDHVLLCEGEDSKSDLKA) and 138-153 (EQSDKGSSKEVEHAKI). At Ser144 the chain carries Phosphoserine.

It belongs to the JUPITER family. In terms of assembly, monomer. Dimer. Interacts with TPCN1.

Its subcellular location is the cytoplasm. The protein localises to the nucleus. Functionally, nicotinic acid adenine dinucleotide phosphate (NAADP) binding protein required for NAADP-evoked intracellular calcium release. Confers NAADP-sensitivity to the two pore channels (TPCs) complex. Enables NAADP to activate Ca(2+) release from the endoplasmic reticulum through ryanodine receptors. The polypeptide is Jupiter microtubule associated homolog 2 (Mus musculus (Mouse)).